The following is a 514-amino-acid chain: Maturase K (514 aa).

This sequence belongs to the intron maturase 2 family. MatK subfamily.

It localises to the plastid. The protein localises to the chloroplast. In terms of biological role, usually encoded in the trnK tRNA gene intron. Probably assists in splicing its own and other chloroplast group II introns. This chain is Maturase K, found in Zamia integrifolia (Coontie).